Reading from the N-terminus, the 626-residue chain is Myelin-associated glycoprotein (626 aa).

Positions 1–19 (MIFLTTLPLFWIMISASRG) are cleaved as a signal peptide. The tract at residues 20–325 (GHWGAWMPSS…RTVELSVMYA (306 aa)) is interaction with RTN4R and RTN4RL2. The Extracellular segment spans residues 20–516 (GHWGAWMPSS…HRLMWAKIGP (497 aa)). An Ig-like V-type domain is found at 22 to 120 (WGAWMPSSIS…LGGKYYFRGD (99 aa)). 3 disulfide bridges follow: cysteine 37/cysteine 165, cysteine 42/cysteine 100, and cysteine 159/cysteine 217. Residue 65 to 67 (YPK) coordinates a ganglioside GT1b (d18:1(4E)). The N-linked (GlcNAc...) asparagine glycan is linked to asparagine 99. A ganglioside GT1b (d18:1(4E))-binding positions include arginine 118 and 124 to 128 (YNQYT). Ig-like C2-type domains are found at residues 139 to 237 (NTPN…LDVK), 241 to 325 (VIVE…VMYA), 327 to 412 (WKPT…VEFA), and 413 to 508 (PIIL…GAHR). N-linked (GlcNAc...) asparagine glycosylation is found at asparagine 223 and asparagine 246. Cysteines 261 and 305 form a disulfide. Residues asparagine 315 and asparagine 332 are each glycosylated (N-linked (GlcNAc...) asparagine). A disulfide bridge links cysteine 347 with cysteine 392. Asparagine 406 carries an N-linked (GlcNAc...) asparagine glycan. Intrachain disulfides connect cysteine 421/cysteine 430 and cysteine 432/cysteine 488. N-linked (GlcNAc...) asparagine glycosylation is found at asparagine 450 and asparagine 454. The chain crosses the membrane as a helical span at residues 517–536 (VGAVVAFAILIAIVCYITQT). A lipid anchor (S-palmitoyl cysteine) is attached at cysteine 531. Residues 537-626 (RRKKNVTESP…LAEYAEIRVK (90 aa)) are Cytoplasmic-facing. A phosphoserine mark is found at serine 545, serine 547, and serine 549. Residues 577-626 (LGSERRLLGLRGEPPELDLSYSHSDLGKRPTKDSYTLTEELAEYAEIRVK) form a required for normal axon myelination in the central nervous system region. The tract at residues 581–608 (RRLLGLRGEPPELDLSYSHSDLGKRPTK) is disordered.

Belongs to the immunoglobulin superfamily. SIGLEC (sialic acid binding Ig-like lectin) family. As to quaternary structure, monomer and homodimer. Interacts (via the first three N-terminal Ig-like domains) with RTN4R and RTN4RL2. Interacts with isoform 2 of BSG. N-glycosylated. In terms of processing, phosphorylated on tyrosine residues. Post-translationally, ubiquitinated, leading to proteasomal degradation. As to expression, detected in myelin. Detected in olfactory bulb and throughout the brain (at protein level). Detected in brain.

It is found in the cell membrane. The protein resides in the membrane raft. Adhesion molecule that mediates interactions between myelinating cells and neurons by binding to neuronal sialic acid-containing gangliosides and to the glycoproteins RTN4R and RTN4RL2. Not required for initial myelination, but seems to play a role in the maintenance of normal axon myelination. Protects motoneurons against apoptosis, also after injury; protection against apoptosis is probably mediated via interaction with neuronal RTN4R and RTN4RL2. Required to prevent degeneration of myelinated axons in adults; this probably depends on binding to gangliosides on the axon cell membrane. Negative regulator of neurite outgrowth; in dorsal root ganglion neurons the inhibition is mediated primarily via binding to neuronal RTN4R or RTN4RL2 and to a lesser degree via binding to neuronal gangliosides. In cerebellar granule cells the inhibition is mediated primarily via binding to neuronal gangliosides. In sensory neurons, inhibition of neurite extension depends only partially on RTN4R, RTN4RL2 and gangliosides. Inhibits axon longitudinal growth. Inhibits axon outgrowth by binding to RTN4R. Preferentially binds to alpha-2,3-linked sialic acid. Binds ganglioside Gt1b. The sequence is that of Myelin-associated glycoprotein (Mag) from Rattus norvegicus (Rat).